Reading from the N-terminus, the 313-residue chain is uncharacterized protein (313 aa).

29–61 provides a ligand contact to NADP(+); sequence ALVTGGGTGLGKAIATTFAHLGASVAIAARRLD.

It belongs to the short-chain dehydrogenases/reductases (SDR) family. 2,4-dienoyl-CoA reductase subfamily.

This is an uncharacterized protein from Caenorhabditis elegans.